A 456-amino-acid chain; its full sequence is Ribonuclease inhibitor (456 aa).

M1 is modified (N-acetylmethionine). LRR repeat units lie at residues 15–43, 44–71, 72–100, 101–128, 129–157, 158–185, 186–214, 215–242, 243–271, 272–299, 300–328, 329–356, 357–385, 386–413, and 414–442; these read WTEL…CKDI, SSAV…VGLV, LQGL…CGIL, PGML…LKLL, CEGL…CEPL, ASVL…VRIL, CQGL…CKDL, CDVV…IAAL, CPGL…CKDL, CRVL…ARLL, CESL…CPYF, CSVL…VQEL, CKAL…CSSL, ANVL…VLQL, and LESL…EEQL. S86 bears the Phosphoserine mark.

As to quaternary structure, forms high-affinity heterodimers with RNASE1, ANG and RNASE2.

The protein resides in the cytoplasm. It is found in the nucleus. Functionally, ribonuclease inhibitor which inhibits RNASE1, RNASE2 and angiogenin (ANG). May play a role in redox homeostasis. Required to inhibit the cytotoxic tRNA ribonuclease activity of ANG in the cytoplasm in absence of stress. Relocates to the nucleus in response to stress, relieving inhibition of ANG in the cytoplasm, and inhibiting the angiogenic activity of ANG in the nucleus. This chain is Ribonuclease inhibitor (Rnh1), found in Mus musculus (Mouse).